Reading from the N-terminus, the 340-residue chain is MLSLSKNWNTLIKPNKVAYENFPETNNKAKIVVEPLERGFGLTLGNAMRRVLLSSLQGAAITSIKIPAIEHEFSSIPGVKEDVSEVILNIKGIEVKMHVAEKRIMKLKATGPCVITAGMIETGHDVEILNPDHVICNLAKNKQLEMELTCKVGKGYVLSTNSYEDNLPIGEIAIDALFNPVKSVTYKVENTRVGQVTDYDKLIMFVETNGDLLPEMAVGLAARILQEQLQLFISFEEQEEDKQVKTDALPFSPYLLKRVDELELSVRSANCLKNDNIIYIGDLVKRTESDMLRTPNFGRKSLNEIKEILAKFNLRFGMDVPDWPPENIQELSNRYEDSYN.

An alpha N-terminal domain (alpha-NTD) region spans residues 1–236 (MLSLSKNWNT…EQLQLFISFE (236 aa)). The interval 246–340 (TDALPFSPYL…LSNRYEDSYN (95 aa)) is alpha C-terminal domain (alpha-CTD).

This sequence belongs to the RNA polymerase alpha chain family. In terms of assembly, homodimer. The RNAP catalytic core consists of 2 alpha, 1 beta, 1 beta' and 1 omega subunit. When a sigma factor is associated with the core the holoenzyme is formed, which can initiate transcription.

The catalysed reaction is RNA(n) + a ribonucleoside 5'-triphosphate = RNA(n+1) + diphosphate. DNA-dependent RNA polymerase catalyzes the transcription of DNA into RNA using the four ribonucleoside triphosphates as substrates. The polypeptide is DNA-directed RNA polymerase subunit alpha (Rickettsia felis (strain ATCC VR-1525 / URRWXCal2) (Rickettsia azadi)).